Here is a 215-residue protein sequence, read N- to C-terminus: MASGDTKTSVKHAHLCAERLSVREEEGDAEDYCTPGAFELERLFWKGSPQYTHVNEVWPRLHIGDEATALDRYGLQKAGFTHVLNAAHGRWNVDTGPDYYRDMAIEYHGVEADDVPTFDLSIFFYSAAAFIDSALRDDHSKILVHCAMGRSRSATLVLAYLMIHKNMTLVDAIQQVAKNRCVLPNRGFLKQLRELDKQLVKQRRQAGPGDSDLGL.

In terms of domain architecture, Tyrosine-protein phosphatase spans 53–201; the sequence is HVNEVWPRLH…LRELDKQLVK (149 aa). 145-152 provides a ligand contact to substrate; that stretch reads HCAMGRSR. Cysteine 146 serves as the catalytic Phosphocysteine intermediate.

Belongs to the protein-tyrosine phosphatase family. Non-receptor class dual specificity subfamily. In terms of assembly, homodimer. Interacts with PRKAA2. In terms of tissue distribution, skeletal muscle, liver and adipose tissue.

It is found in the cytoplasm. The protein resides in the nucleus. It carries out the reaction O-phospho-L-tyrosyl-[protein] + H2O = L-tyrosyl-[protein] + phosphate. The catalysed reaction is O-phospho-L-seryl-[protein] + H2O = L-seryl-[protein] + phosphate. It catalyses the reaction O-phospho-L-threonyl-[protein] + H2O = L-threonyl-[protein] + phosphate. Functionally, dual specificity phosphatase able to dephosphorylate phosphotyrosine, phosphoserine and phosphothreonine residues within the same substrate, with a preference for phosphotyrosine as a substrate. Involved in the modulation of intracellular signaling cascades. In skeletal muscle regulates systemic glucose homeostasis by activating, AMPK, an energy sensor protein kinase. Affects MAP kinase signaling though modulation of the MAPK1/2 cascade in skeletal muscle promoting muscle cell differentiation, development and atrophy. In Mus musculus (Mouse), this protein is Dual specificity phosphatase 29.